The chain runs to 348 residues: S-adenosylmethionine:tRNA ribosyltransferase-isomerase (348 aa).

Belongs to the QueA family. As to quaternary structure, monomer.

The protein resides in the cytoplasm. It catalyses the reaction 7-aminomethyl-7-carbaguanosine(34) in tRNA + S-adenosyl-L-methionine = epoxyqueuosine(34) in tRNA + adenine + L-methionine + 2 H(+). Its pathway is tRNA modification; tRNA-queuosine biosynthesis. Functionally, transfers and isomerizes the ribose moiety from AdoMet to the 7-aminomethyl group of 7-deazaguanine (preQ1-tRNA) to give epoxyqueuosine (oQ-tRNA). This chain is S-adenosylmethionine:tRNA ribosyltransferase-isomerase, found in Cytophaga hutchinsonii (strain ATCC 33406 / DSM 1761 / CIP 103989 / NBRC 15051 / NCIMB 9469 / D465).